Reading from the N-terminus, the 737-residue chain is NAD-dependent protein deacetylase sirtuin-1 (737 aa).

Residues 1-28 (MADEVALALQAAGSPSAAAAMEAASQPA) show a composition bias toward low complexity. Disordered stretches follow at residues 1–56 (MADE…AVAP) and 75–125 (EAAG…EAAA). N-acetylalanine is present on Ala-2. The segment at 2–131 (ADEVALALQA…EAAAAAAAAA (130 aa)) is interaction with CLOCK. The interaction with H1-4 stretch occupies residues 2 to 268 (ADEVALALQA…SCGIPDFRSR (267 aa)). Phosphoserine is present on residues Ser-14 and Ser-25. The short motif at 32-39 (LRKRPRRD) is the Nuclear localization signal element. Ser-46 carries the phosphoserine; by MAPK8 modification. 2 stretches are compositionally biased toward low complexity: residues 46–56 (SPGEPSAAVAP) and 75–94 (EAAG…AVAG). Acidic residues predominate over residues 111-123 (DFDDDEGEEEDEA). Positions 135–533 (RDNLLLTDGL…LHISEDSSSP (399 aa)) are interaction with CCAR2. The Nuclear export signal signature appears at 138-145 (LLLTDGLL). Ser-151, Ser-154, Ser-164, and Ser-165 each carry phosphoserine. Positions 152–171 (CESDDDDRTSHASSSDWTPR) are disordered. The Nuclear localization signal motif lies at 223–230 (PPKRKKRK). Positions 228 to 488 (KRKDINTIED…NELCHRLGGE (261 aa)) constitute a Deacetylase sirtuin-type domain. Lys-230 carries the N6-acetyllysine modification. Positions 248-251 (IIVL) are required for interaction with the sumoylated form of CCAR2. NAD(+)-binding positions include 253–272 (GAGV…DGIY) and 337–340 (QNID). His-355 (proton acceptor) is an active-site residue. Cys-363 and Cys-366 together coordinate Zn(2+). Lys-369 carries the N6-acetyllysine modification. Residues Cys-387 and Cys-390 each contribute to the Zn(2+) site. An S-nitrosocysteine mark is found at Cys-387 and Cys-390. Lys-422 is modified (N6-acetyllysine). A Nuclear export signal motif is present at residues 425 to 431 (VDLLIVI). Residues 432–434 (GSS), 457–459 (NRE), and Cys-474 each bind NAD(+). Position 505 is an N6-acetyllysine (Lys-505). The disordered stretch occupies residues 514-539 (VHLSELPPTPLHISEDSSSPERTVPQ). Thr-522 bears the Phosphothreonine; by DYRK1A, DYRK3 and MAPK8 mark. At Ser-527 the chain carries Phosphoserine. Residues 529–539 (DSSSPERTVPQ) are compositionally biased toward polar residues. Position 536 is a phosphothreonine (Thr-536). At Lys-600 the chain carries N6-acetyllysine. Phosphoserine; by CaMK2 is present on residues Ser-649 and Ser-651. The interval 653 to 713 (DDVLSSSSCG…GSGFGADGGD (61 aa)) is disordered. Residues 656–676 (LSSSSCGSNSDSGTCQSPSLE) are compositionally biased toward low complexity. Acidic residues predominate over residues 677–697 (EPLEDESEIEEFYNGLEDDTE). Ser-737 is subject to Phosphoserine.

This sequence belongs to the sirtuin family. Class I subfamily. Interacts with XBP1 isoform 2. Found in a complex with PCAF and MYOD1 Component of the eNoSC complex, composed of SIRT1, SUV39H1 and RRP8. Interacts with HES1, HEY2 and PML. Interacts with RPS19BP1/AROS. Interacts with CCAR2 (via N-terminus); the interaction disrupts the interaction between SIRT1 and p53/TP53. Interacts with SETD7; the interaction induces the dissociation of SIRT1 from p53/TP53 and increases p53/TP53 activity. Interacts with MYCN, NR1I2, CREBZF, TSC2, TLE1, FOS, JUN, NR0B2, PPARG, NCOR, IRS1, IRS2 and NMNAT1. Interacts with HNF1A; the interaction occurs under nutrient restriction. Interacts with SUZ12; the interaction mediates the association with the PRC4 histone methylation complex which is specific as an association with PCR2 and PCR3 complex variants is not found. Interacts with FOXO1; the interaction deacetylates FOXO1, enhances its DNA-binding ability and increases its transcriptional activity. Interacts with BCL6; leads to a epigenetic repression of specific target genes. Interacts with CLOCK, BMAL1 and PER2. Interacts with PPARA; the interaction seems to be modulated by NAD(+) levels. Interacts with NR1H3 and this interaction is inhibited in the presence of CCAR2. Interacts with CHEK2 and p53/TP53. Exhibits a preferential interaction with sumoylated CCAR2 over its unmodified form. Interacts with PACS2. Interacts with SIRT7. Interacts with PUS7. Interacts with TULP3. Interacts with MORN3; the interaction enhances the ubiquitination of p53/TP53. Zn(2+) serves as cofactor. Methylated on multiple lysine residues; methylation is enhanced after DNA damage and is dispensable for deacetylase activity toward p53/TP53. In terms of processing, phosphorylated. Phosphorylated by STK4/MST1, resulting in inhibition of SIRT1-mediated p53/TP53 deacetylation. Phosphorylation by MAPK8/JNK1 at Ser-46 and Thr-522 leads to increased nuclear localization and enzymatic activity. Phosphorylation at Thr-522 by DYRK1A and DYRK3 activates deacetylase activity and promotes cell survival. Phosphorylation by mammalian target of rapamycin complex 1 (mTORC1) at Ser-46 inhibits deacetylation activity. Phosphorylated by CaMK2, leading to increased p53/TP53 and NF-kappa-B p65/RELA deacetylation activity. Post-translationally, proteolytically cleaved by cathepsin B upon TNF-alpha treatment to yield catalytic inactive but stable SirtT1 75 kDa fragment (75SirT1). S-nitrosylated by GAPDH, leading to inhibit the NAD-dependent protein deacetylase activity. In terms of processing, acetylated at various Lys residues. Deacetylated via an autocatalytic mechanism. Autodeacetylation at Lys-230 promotes its protein deacetylase activity. Post-translationally, ubiquitinated; leading to degradation. Deubiquitinated by USP22; leading to stabilization. Widely expressed. Weakly expressed in liver and skeletal muscle.

It is found in the nucleus. The protein localises to the PML body. Its subcellular location is the cytoplasm. The protein resides in the mitochondrion. The catalysed reaction is N(6)-acetyl-L-lysyl-[protein] + NAD(+) + H2O = 2''-O-acetyl-ADP-D-ribose + nicotinamide + L-lysyl-[protein]. The enzyme catalyses N(6)-propanoyl-L-lysyl-[protein] + NAD(+) + H2O = 3''-O-propanoyl-ADP-D-ribose + nicotinamide + L-lysyl-[protein]. It catalyses the reaction N(6)-(2E)-butenoyl-L-lysyl-[protein] + NAD(+) + H2O = 2''-O-(2E)-but-2-enoyl-ADP-D-ribose + nicotinamide + L-lysyl-[protein]. It carries out the reaction N(6)-[(S)-lactoyl]-L-lysyl-[protein] + NAD(+) + H2O = 2''-O-(S)-lactoyl-ADP-D-ribose + nicotinamide + L-lysyl-[protein]. Activated by resveratrol (3,5,4'-trihydroxy-trans-stilbene), butein (3,4,2',4'-tetrahydroxychalcone), piceatannol (3,5,3',4'-tetrahydroxy-trans-stilbene), Isoliquiritigenin (4,2',4'-trihydroxychalcone), fisetin (3,7,3',4'-tetrahydroxyflavone) and quercetin (3,5,7,3',4'-pentahydroxyflavone). MAPK8/JNK1 and RPS19BP1/AROS act as positive regulators of deacetylation activity. Inhibited by nicotinamide. Negatively regulated by CCAR2. In terms of biological role, NAD-dependent protein deacetylase that links transcriptional regulation directly to intracellular energetics and participates in the coordination of several separated cellular functions such as cell cycle, response to DNA damage, metabolism, apoptosis and autophagy. Can modulate chromatin function through deacetylation of histones and can promote alterations in the methylation of histones and DNA, leading to transcriptional repression. Deacetylates a broad range of transcription factors and coregulators, thereby regulating target gene expression positively and negatively. Serves as a sensor of the cytosolic ratio of NAD(+)/NADH which is altered by glucose deprivation and metabolic changes associated with caloric restriction. Is essential in skeletal muscle cell differentiation and in response to low nutrients mediates the inhibitory effect on skeletal myoblast differentiation which also involves 5'-AMP-activated protein kinase (AMPK) and nicotinamide phosphoribosyltransferase (NAMPT). Component of the eNoSC (energy-dependent nucleolar silencing) complex, a complex that mediates silencing of rDNA in response to intracellular energy status and acts by recruiting histone-modifying enzymes. The eNoSC complex is able to sense the energy status of cell: upon glucose starvation, elevation of NAD(+)/NADP(+) ratio activates SIRT1, leading to histone H3 deacetylation followed by dimethylation of H3 at 'Lys-9' (H3K9me2) by SUV39H1 and the formation of silent chromatin in the rDNA locus. Deacetylates 'Lys-266' of SUV39H1, leading to its activation. Inhibits skeletal muscle differentiation by deacetylating PCAF and MYOD1. Deacetylates H2A and 'Lys-26' of H1-4. Deacetylates 'Lys-16' of histone H4 (in vitro). Involved in NR0B2/SHP corepression function through chromatin remodeling: Recruited to LRH1 target gene promoters by NR0B2/SHP thereby stimulating histone H3 and H4 deacetylation leading to transcriptional repression. Proposed to contribute to genomic integrity via positive regulation of telomere length; however, reports on localization to pericentromeric heterochromatin are conflicting. Proposed to play a role in constitutive heterochromatin (CH) formation and/or maintenance through regulation of the available pool of nuclear SUV39H1. Upon oxidative/metabolic stress decreases SUV39H1 degradation by inhibiting SUV39H1 polyubiquitination by MDM2. This increase in SUV39H1 levels enhances SUV39H1 turnover in CH, which in turn seems to accelerate renewal of the heterochromatin which correlates with greater genomic integrity during stress response. Deacetylates 'Lys-382' of p53/TP53 and impairs its ability to induce transcription-dependent proapoptotic program and modulate cell senescence. Deacetylates TAF1B and thereby represses rDNA transcription by the RNA polymerase I. Deacetylates MYC, promotes the association of MYC with MAX and decreases MYC stability leading to compromised transformational capability. Deacetylates FOXO3 in response to oxidative stress thereby increasing its ability to induce cell cycle arrest and resistance to oxidative stress but inhibiting FOXO3-mediated induction of apoptosis transcriptional activity; also leading to FOXO3 ubiquitination and protesomal degradation. Appears to have a similar effect on MLLT7/FOXO4 in regulation of transcriptional activity and apoptosis. Deacetylates DNMT1; thereby impairs DNMT1 methyltransferase-independent transcription repressor activity, modulates DNMT1 cell cycle regulatory function and DNMT1-mediated gene silencing. Deacetylates RELA/NF-kappa-B p65 thereby inhibiting its transactivating potential and augments apoptosis in response to TNF-alpha. Deacetylates HIF1A, KAT5/TIP60, RB1 and HIC1. Deacetylates FOXO1, which increases its DNA binding ability and enhances its transcriptional activity leading to increased gluconeogenesis in liver. Inhibits E2F1 transcriptional activity and apoptotic function, possibly by deacetylation. Involved in HES1- and HEY2-mediated transcriptional repression. In cooperation with MYCN seems to be involved in transcriptional repression of DUSP6/MAPK3 leading to MYCN stabilization by phosphorylation at 'Ser-62'. Deacetylates MEF2D. Required for antagonist-mediated transcription suppression of AR-dependent genes which may be linked to local deacetylation of histone H3. Represses HNF1A-mediated transcription. Required for the repression of ESRRG by CREBZF. Deacetylates NR1H3 and NR1H2 and deacetylation of NR1H3 at 'Lys-434' positively regulates transcription of NR1H3:RXR target genes, promotes NR1H3 proteasomal degradation and results in cholesterol efflux; a promoter clearing mechanism after reach round of transcription is proposed. Involved in lipid metabolism: deacetylates LPIN1, thereby inhibiting diacylglycerol synthesis. Implicated in regulation of adipogenesis and fat mobilization in white adipocytes by repression of PPARG which probably involves association with NCOR1 and SMRT/NCOR2. Deacetylates p300/EP300 and PRMT1. Deacetylates ACSS2 leading to its activation, and HMGCS1 deacetylation. Involved in liver and muscle metabolism. Through deacetylation and activation of PPARGC1A is required to activate fatty acid oxidation in skeletal muscle under low-glucose conditions and is involved in glucose homeostasis. Involved in regulation of PPARA and fatty acid beta-oxidation in liver. Involved in positive regulation of insulin secretion in pancreatic beta cells in response to glucose; the function seems to imply transcriptional repression of UCP2. Proposed to deacetylate IRS2 thereby facilitating its insulin-induced tyrosine phosphorylation. Deacetylates SREBF1 isoform SREBP-1C thereby decreasing its stability and transactivation in lipogenic gene expression. Involved in DNA damage response by repressing genes which are involved in DNA repair, such as XPC and TP73, deacetylating XRCC6/Ku70, and facilitating recruitment of additional factors to sites of damaged DNA, such as SIRT1-deacetylated NBN can recruit ATM to initiate DNA repair and SIRT1-deacetylated XPA interacts with RPA2. Also involved in DNA repair of DNA double-strand breaks by homologous recombination and specifically single-strand annealing independently of XRCC6/Ku70 and NBN. Promotes DNA double-strand breaks by mediating deacetylation of SIRT6. Transcriptional suppression of XPC probably involves an E2F4:RBL2 suppressor complex and protein kinase B (AKT) signaling. Transcriptional suppression of TP73 probably involves E2F4 and PCAF. Deacetylates WRN thereby regulating its helicase and exonuclease activities and regulates WRN nuclear translocation in response to DNA damage. Deacetylates APEX1 at 'Lys-6' and 'Lys-7' and stimulates cellular AP endonuclease activity by promoting the association of APEX1 to XRCC1. Catalyzes deacetylation of ERCC4/XPF, thereby impairing interaction with ERCC1 and nucleotide excision repair (NER). Increases p53/TP53-mediated transcription-independent apoptosis by blocking nuclear translocation of cytoplasmic p53/TP53 and probably redirecting it to mitochondria. Deacetylates XRCC6/Ku70 at 'Lys-537' and 'Lys-540' causing it to sequester BAX away from mitochondria thereby inhibiting stress-induced apoptosis. Is involved in autophagy, presumably by deacetylating ATG5, ATG7 and MAP1LC3B/ATG8. Deacetylates AKT1 which leads to enhanced binding of AKT1 and PDK1 to PIP3 and promotes their activation. Proposed to play role in regulation of STK11/LBK1-dependent AMPK signaling pathways implicated in cellular senescence which seems to involve the regulation of the acetylation status of STK11/LBK1. Can deacetylate STK11/LBK1 and thereby increase its activity, cytoplasmic localization and association with STRAD; however, the relevance of such activity in normal cells is unclear. In endothelial cells is shown to inhibit STK11/LBK1 activity and to promote its degradation. Deacetylates SMAD7 at 'Lys-64' and 'Lys-70' thereby promoting its degradation. Deacetylates CIITA and augments its MHC class II transactivation and contributes to its stability. Deacetylates MECOM/EVI1. Deacetylates PML at 'Lys-487' and this deacetylation promotes PML control of PER2 nuclear localization. During the neurogenic transition, represses selective NOTCH1-target genes through histone deacetylation in a BCL6-dependent manner and leading to neuronal differentiation. Regulates the circadian expression of several core clock genes, including BMAL1, RORC, PER2 and CRY1 and plays a critical role in maintaining a controlled rhythmicity in histone acetylation, thereby contributing to circadian chromatin remodeling. Deacetylates BMAL1 and histones at the circadian gene promoters in order to facilitate repression by inhibitory components of the circadian oscillator. Deacetylates PER2, facilitating its ubiquitination and degradation by the proteasome. Protects cardiomyocytes against palmitate-induced apoptosis. Deacetylates XBP1 isoform 2; deacetylation decreases protein stability of XBP1 isoform 2 and inhibits its transcriptional activity. Deacetylates PCK1 and directs its activity toward phosphoenolpyruvate production promoting gluconeogenesis. Involved in the CCAR2-mediated regulation of PCK1 and NR1D1. Deacetylates CTNB1 at 'Lys-49'. In POMC (pro-opiomelanocortin) neurons, required for leptin-induced activation of PI3K signaling. Deacetylates SOX9; promoting SOX9 nuclear localization and transactivation activity. Involved in the regulation of centrosome duplication: Deacetylates CENATAC in G1 phase, allowing for SASS6 accumulation on the centrosome and subsequent procentriole assembly. Deacetylates NDC80/HEC1. In addition to protein deacetylase activity, also acts as a protein-lysine deacylase by mediating protein delactylation, depropionylation and decrotonylation. Mediates depropionylation of Osterix (SP7). Catalyzes decrotonylation of histones; it however does not represent a major histone decrotonylase. Mediates protein delactylation of TEAD1 and YAP1. Its function is as follows. Deacetylates 'Lys-382' of p53/TP53, however with lower activity than isoform 1. In combination, the two isoforms exert an additive effect. Isoform 2 regulates p53/TP53 expression and cellular stress response and is in turn repressed by p53/TP53 presenting a SIRT1 isoform-dependent auto-regulatory loop. Catalytically inactive 75SirT1 may be involved in regulation of apoptosis. May be involved in protecting chondrocytes from apoptotic death by associating with cytochrome C and interfering with apoptosome assembly. In Mus musculus (Mouse), this protein is NAD-dependent protein deacetylase sirtuin-1 (Sirt1).